The sequence spans 264 residues: Undecaprenyl-diphosphatase (264 aa).

8 consecutive transmembrane segments (helical) span residues 15 to 37 (GLTE…LLGF), 42 to 62 (AASF…VLYW), 84 to 104 (YLLF…HDFI), 108 to 128 (LFNP…ILIV), 143 to 163 (VTPK…WPGF), 182 to 202 (IAAE…TGYD), 217 to 237 (FLAV…KGFI), and 243 to 263 (LTLR…LFFW).

It belongs to the UppP family.

It localises to the cell inner membrane. The catalysed reaction is di-trans,octa-cis-undecaprenyl diphosphate + H2O = di-trans,octa-cis-undecaprenyl phosphate + phosphate + H(+). In terms of biological role, catalyzes the dephosphorylation of undecaprenyl diphosphate (UPP). Confers resistance to bacitracin. The protein is Undecaprenyl-diphosphatase of Maridesulfovibrio salexigens (strain ATCC 14822 / DSM 2638 / NCIMB 8403 / VKM B-1763) (Desulfovibrio salexigens).